The following is a 608-amino-acid chain: Aspartate--tRNA(Asp/Asn) ligase (608 aa).

Glutamate 179 lines the L-aspartate pocket. Residues glutamine 203 to lysine 206 form an aspartate region. Arginine 225 is an L-aspartate binding site. Residues arginine 225 to glutamate 227 and glutamine 234 contribute to the ATP site. Histidine 461 provides a ligand contact to L-aspartate. Glutamate 494 lines the ATP pocket. Arginine 501 lines the L-aspartate pocket. An ATP-binding site is contributed by glycine 546 to arginine 549.

The protein belongs to the class-II aminoacyl-tRNA synthetase family. Type 1 subfamily. Homodimer.

Its subcellular location is the cytoplasm. The enzyme catalyses tRNA(Asx) + L-aspartate + ATP = L-aspartyl-tRNA(Asx) + AMP + diphosphate. Its function is as follows. Aspartyl-tRNA synthetase with relaxed tRNA specificity since it is able to aspartylate not only its cognate tRNA(Asp) but also tRNA(Asn). Reaction proceeds in two steps: L-aspartate is first activated by ATP to form Asp-AMP and then transferred to the acceptor end of tRNA(Asp/Asn). This is Aspartate--tRNA(Asp/Asn) ligase from Psychrobacter arcticus (strain DSM 17307 / VKM B-2377 / 273-4).